Consider the following 257-residue polypeptide: AA9 family lytic polysaccharide monooxygenase U (257 aa).

An N-terminal signal peptide occupies residues 1 to 19 (MKLYLAAFLGAVATPGAFA). Histidine 20 contacts Cu(2+). Asparagine 29 and asparagine 71 each carry an N-linked (GlcNAc...) asparagine glycan. A disulfide bond links cysteine 74 and cysteine 194. Histidine 113 is a binding site for Cu(2+). The N-linked (GlcNAc...) asparagine glycan is linked to asparagine 161. O2 is bound at residue glutamine 189. Position 191 (tyrosine 191) interacts with Cu(2+).

The protein belongs to the polysaccharide monooxygenase AA9 family. Requires Cu(2+) as cofactor.

It localises to the secreted. The catalysed reaction is [(1-&gt;4)-beta-D-glucosyl]n+m + reduced acceptor + O2 = 4-dehydro-beta-D-glucosyl-[(1-&gt;4)-beta-D-glucosyl]n-1 + [(1-&gt;4)-beta-D-glucosyl]m + acceptor + H2O.. Functionally, lytic polysaccharide monooxygenase (LPMO) that depolymerizes crystalline and amorphous polysaccharides via the oxidation of scissile alpha- or beta-(1-4)-glycosidic bonds, yielding C1 and C4 oxidation products. Catalysis by LPMOs requires the reduction of the active-site copper from Cu(II) to Cu(I) by a reducing agent and H(2)O(2) or O(2) as a cosubstrate. Shows no activity on wheat arabinoxylan, konjac glucomannan, acetylated spruce galactoglucomannan, or cellopentaose. This is AA9 family lytic polysaccharide monooxygenase U from Thermothielavioides terrestris (strain ATCC 38088 / NRRL 8126) (Thielavia terrestris).